The following is a 751-amino-acid chain: Cellulose synthase-like protein G3 (751 aa).

2 helical membrane-spanning segments follow: residues 47–67 and 72–92; these read IYAV…VHSL and TTLI…MWAT. Residues aspartate 161 and aspartate 466 contribute to the active site. Transmembrane regions (helical) follow at residues 543–563, 577–597, 617–639, 674–694, 697–717, and 731–751; these read CWAF…LALL, FWLY…DFVL, FSSH…THGF, TVAI…FAWG, LVLE…IYEA, and VCFV…VFLK.

Belongs to the glycosyltransferase 2 family. Plant cellulose synthase-like G subfamily.

The protein localises to the golgi apparatus membrane. Thought to be a Golgi-localized beta-glycan synthase that polymerize the backbones of noncellulosic polysaccharides (hemicelluloses) of plant cell wall. The protein is Cellulose synthase-like protein G3 (CSLG3) of Arabidopsis thaliana (Mouse-ear cress).